Consider the following 142-residue polypeptide: Large ribosomal subunit protein uL13 (142 aa).

This sequence belongs to the universal ribosomal protein uL13 family. In terms of assembly, part of the 50S ribosomal subunit.

In terms of biological role, this protein is one of the early assembly proteins of the 50S ribosomal subunit, although it is not seen to bind rRNA by itself. It is important during the early stages of 50S assembly. The chain is Large ribosomal subunit protein uL13 from Ectopseudomonas mendocina (strain ymp) (Pseudomonas mendocina).